The sequence spans 143 residues: MIQFILIQNRHGKNRLSKYYVPFDDDEKVRLKARIHQLISQRNQKFQANFLEWENSKLVYRRYAGLYFCFCVDSTDNDLAILEMIHFFVEILDSFFGNVCELDLIFNFYKVSAILDEIILGGEIGESNKKSVLERIEALEKLE.

This sequence belongs to the adaptor complexes small subunit family. In terms of assembly, adaptor protein complex 2 (AP-2) is a heterotetramer composed of two large adaptins (alpha-type subunit apl3 and beta-type subunit apl1), a medium chain (mu-type subunit apm4) and a small adaptin (sigma-type subunit aps2).

The protein resides in the cell membrane. The protein localises to the membrane. It is found in the coated pit. Component of the adaptor complexes which link clathrin to receptors in coated vesicles. Clathrin-associated protein complexes are believed to interact with the cytoplasmic tails of membrane proteins, leading to their selection and concentration. The sequence is that of AP-2 complex subunit sigma (aps2) from Schizosaccharomyces pombe (strain 972 / ATCC 24843) (Fission yeast).